Consider the following 147-residue polypeptide: Protein MC014 (147 aa).

The protein localises to the host nucleus. The polypeptide is Protein MC014 (MC014) (Homo sapiens (Human)).